The sequence spans 875 residues: Serine/threonine-protein phosphatase 4 regulatory subunit 4 (875 aa).

2 HEAT repeats span residues 215–253 and 254–292; these read ILPL…TKNV and VLPE…RSQT. The stretch at 686–730 forms a coiled coil; sequence MFQKKNYEKDLLDQEKEREELLFLEMEQLEKEKHQSDGRLASDKS. Residues 718–739 show a composition bias toward basic and acidic residues; it reads KHQSDGRLASDKSFEKKRRDSR. The interval 718 to 773 is disordered; it reads KHQSDGRLASDKSFEKKRRDSRTSTQSLSKNLPISVPGPSSSTASTSKEIKKSKLT. Residues 740–764 are compositionally biased toward polar residues; it reads TSTQSLSKNLPISVPGPSSSTASTS. The residue at position 777 (Ser777) is a Phosphoserine. At Thr799 the chain carries Phosphothreonine. Residues 825–859 show a composition bias toward polar residues; the sequence is RNASSVPASFSPNPVMPSTSRGPGNTADPKSSGSK. Positions 825–875 are disordered; that stretch reads RNASSVPASFSPNPVMPSTSRGPGNTADPKSSGSKDAQPRKATLKSRKSNP. The span at 866–875 shows a compositional bias: basic residues; that stretch reads ATLKSRKSNP.

Serine/threonine-protein phosphatase 4 (PP4) occurs in different assemblies of the catalytic and one or more regulatory subunits. Component of the PP4 complex PPP4C-PPP4R4.

The protein localises to the cytoplasm. Putative regulatory subunit of serine/threonine-protein phosphatase 4. The polypeptide is Serine/threonine-protein phosphatase 4 regulatory subunit 4 (Ppp4r4) (Mus musculus (Mouse)).